The primary structure comprises 180 residues: NAD(P)H-quinone oxidoreductase subunit I, chloroplastic (180 aa).

2 consecutive 4Fe-4S ferredoxin-type domains span residues 55-84 and 95-124; these read GRIH…VHWR and LNYS…MTEE. 8 residues coordinate [4Fe-4S] cluster: Cys-64, Cys-67, Cys-70, Cys-74, Cys-104, Cys-107, Cys-110, and Cys-114.

The protein belongs to the complex I 23 kDa subunit family. In terms of assembly, NDH is composed of at least 16 different subunits, 5 of which are encoded in the nucleus. Requires [4Fe-4S] cluster as cofactor.

The protein localises to the plastid. The protein resides in the chloroplast thylakoid membrane. It carries out the reaction a plastoquinone + NADH + (n+1) H(+)(in) = a plastoquinol + NAD(+) + n H(+)(out). The catalysed reaction is a plastoquinone + NADPH + (n+1) H(+)(in) = a plastoquinol + NADP(+) + n H(+)(out). Functionally, NDH shuttles electrons from NAD(P)H:plastoquinone, via FMN and iron-sulfur (Fe-S) centers, to quinones in the photosynthetic chain and possibly in a chloroplast respiratory chain. The immediate electron acceptor for the enzyme in this species is believed to be plastoquinone. Couples the redox reaction to proton translocation, and thus conserves the redox energy in a proton gradient. The protein is NAD(P)H-quinone oxidoreductase subunit I, chloroplastic of Calycanthus floridus var. glaucus (Eastern sweetshrub).